The sequence spans 328 residues: GMP reductase (328 aa).

Cysteine 176 acts as the Thioimidate intermediate in catalysis. 205 to 228 contacts NADP(+); the sequence is IIADGGIRTHGDVAKSIRFGATMV.

It belongs to the IMPDH/GMPR family. GuaC type 2 subfamily.

It catalyses the reaction IMP + NH4(+) + NADP(+) = GMP + NADPH + 2 H(+). Functionally, catalyzes the irreversible NADPH-dependent deamination of GMP to IMP. It functions in the conversion of nucleobase, nucleoside and nucleotide derivatives of G to A nucleotides, and in maintaining the intracellular balance of A and G nucleotides. The chain is GMP reductase from Bacillus cereus (strain ATCC 14579 / DSM 31 / CCUG 7414 / JCM 2152 / NBRC 15305 / NCIMB 9373 / NCTC 2599 / NRRL B-3711).